Here is a 92-residue protein sequence, read N- to C-terminus: UPF0237 protein MA_3235 (92 aa).

The region spanning 7–81 is the ACT domain; it reads IITVIGSDRV…KSLGVEVKVQ (75 aa).

This sequence belongs to the UPF0237 family.

This Methanosarcina acetivorans (strain ATCC 35395 / DSM 2834 / JCM 12185 / C2A) protein is UPF0237 protein MA_3235.